Consider the following 417-residue polypeptide: UDP-N-acetylglucosamine 1-carboxyvinyltransferase (417 aa).

23 to 24 contributes to the phosphoenolpyruvate binding site; that stretch reads KN. R93 is a binding site for UDP-N-acetyl-alpha-D-glucosamine. The active-site Proton donor is the D117. Residues D305 and V327 each contribute to the UDP-N-acetyl-alpha-D-glucosamine site.

The protein belongs to the EPSP synthase family. MurA subfamily.

The protein resides in the cytoplasm. It catalyses the reaction phosphoenolpyruvate + UDP-N-acetyl-alpha-D-glucosamine = UDP-N-acetyl-3-O-(1-carboxyvinyl)-alpha-D-glucosamine + phosphate. The protein operates within cell wall biogenesis; peptidoglycan biosynthesis. Cell wall formation. Adds enolpyruvyl to UDP-N-acetylglucosamine. This Mycolicibacterium paratuberculosis (strain ATCC BAA-968 / K-10) (Mycobacterium paratuberculosis) protein is UDP-N-acetylglucosamine 1-carboxyvinyltransferase.